Reading from the N-terminus, the 713-residue chain is Phosphoribosylformylglycinamidine synthase subunit PurL (713 aa).

Residue H34 is part of the active site. 2 residues coordinate ATP: Y37 and R73. E75 lines the Mg(2+) pocket. Residues S76–H79 and R98 contribute to the substrate site. Catalysis depends on H77, which acts as the Proton acceptor. Mg(2+) is bound at residue D99. Residue Q221 participates in substrate binding. D249 lines the Mg(2+) pocket. E292–Q294 is a substrate binding site. The ATP site is built by D474 and G511. A substrate-binding site is contributed by S514.

Belongs to the FGAMS family. In terms of assembly, monomer. Part of the FGAM synthase complex composed of 1 PurL, 1 PurQ and 2 PurS subunits.

It is found in the cytoplasm. The enzyme catalyses N(2)-formyl-N(1)-(5-phospho-beta-D-ribosyl)glycinamide + L-glutamine + ATP + H2O = 2-formamido-N(1)-(5-O-phospho-beta-D-ribosyl)acetamidine + L-glutamate + ADP + phosphate + H(+). The protein operates within purine metabolism; IMP biosynthesis via de novo pathway; 5-amino-1-(5-phospho-D-ribosyl)imidazole from N(2)-formyl-N(1)-(5-phospho-D-ribosyl)glycinamide: step 1/2. Its function is as follows. Part of the phosphoribosylformylglycinamidine synthase complex involved in the purines biosynthetic pathway. Catalyzes the ATP-dependent conversion of formylglycinamide ribonucleotide (FGAR) and glutamine to yield formylglycinamidine ribonucleotide (FGAM) and glutamate. The FGAM synthase complex is composed of three subunits. PurQ produces an ammonia molecule by converting glutamine to glutamate. PurL transfers the ammonia molecule to FGAR to form FGAM in an ATP-dependent manner. PurS interacts with PurQ and PurL and is thought to assist in the transfer of the ammonia molecule from PurQ to PurL. The protein is Phosphoribosylformylglycinamidine synthase subunit PurL of Ignicoccus hospitalis (strain KIN4/I / DSM 18386 / JCM 14125).